Here is a 147-residue protein sequence, read N- to C-terminus: UPF0208 membrane protein SO_2914 (147 aa).

The next 2 membrane-spanning stretches (helical) occupy residues 40-60 (LAIL…LYTY) and 68-88 (ALTI…WLGW).

The protein belongs to the UPF0208 family.

The protein resides in the cell inner membrane. The polypeptide is UPF0208 membrane protein SO_2914 (Shewanella oneidensis (strain ATCC 700550 / JCM 31522 / CIP 106686 / LMG 19005 / NCIMB 14063 / MR-1)).